Reading from the N-terminus, the 90-residue chain is Probable Fe(2+)-trafficking protein (90 aa).

The protein belongs to the Fe(2+)-trafficking protein family.

Functionally, could be a mediator in iron transactions between iron acquisition and iron-requiring processes, such as synthesis and/or repair of Fe-S clusters in biosynthetic enzymes. This Chromohalobacter salexigens (strain ATCC BAA-138 / DSM 3043 / CIP 106854 / NCIMB 13768 / 1H11) protein is Probable Fe(2+)-trafficking protein.